The following is a 115-amino-acid chain: Succinate dehydrogenase assembly factor 3, mitochondrial (115 aa).

This sequence belongs to the complex I LYR family. SDHAF3 subfamily. As to quaternary structure, interacts with the iron-sulfur protein subunit within the SDH catalytic dimer.

Its subcellular location is the mitochondrion matrix. Functionally, plays an essential role in the assembly of succinate dehydrogenase (SDH), an enzyme complex (also referred to as respiratory complex II) that is a component of both the tricarboxylic acid (TCA) cycle and the mitochondrial electron transport chain, and which couples the oxidation of succinate to fumarate with the reduction of ubiquinone (coenzyme Q) to ubiquinol. Promotes maturation of the iron-sulfur protein subunit of the SDH catalytic dimer, protecting it from the deleterious effects of oxidants. May act together with SDHAF1. This Nematostella vectensis (Starlet sea anemone) protein is Succinate dehydrogenase assembly factor 3, mitochondrial (acn9).